A 426-amino-acid chain; its full sequence is Enolase (426 aa).

A (2R)-2-phosphoglycerate-binding site is contributed by Q163. E205 (proton donor) is an active-site residue. D242, E285, and D312 together coordinate Mg(2+). (2R)-2-phosphoglycerate contacts are provided by K337, R366, S367, and K388. The Proton acceptor role is filled by K337.

It belongs to the enolase family. Mg(2+) is required as a cofactor.

It is found in the cytoplasm. The protein resides in the secreted. Its subcellular location is the cell surface. The catalysed reaction is (2R)-2-phosphoglycerate = phosphoenolpyruvate + H2O. It participates in carbohydrate degradation; glycolysis; pyruvate from D-glyceraldehyde 3-phosphate: step 4/5. In terms of biological role, catalyzes the reversible conversion of 2-phosphoglycerate (2-PG) into phosphoenolpyruvate (PEP). It is essential for the degradation of carbohydrates via glycolysis. The chain is Enolase from Gluconobacter oxydans (strain 621H) (Gluconobacter suboxydans).